The primary structure comprises 424 residues: UPF0053 protein MG146 homolog (424 aa).

One can recognise a CNNM transmembrane domain in the interval 6 to 191 (SGGLLALIII…EQNGLFTKED (186 aa)). 4 helical membrane passes run 7–27 (GGLLALIIISIILLACISAVV), 71–91 (LITILVANNIVAILVSNILFL), 101–121 (AISSALNLLISGVLLLMLCEI), and 135–155 (LVYFAVVVYFFYILFWPITKL). 2 consecutive CBS domains span residues 210-270 (MIKW…NEPF) and 275-335 (LLYP…EHDE).

Belongs to the UPF0053 family.

It localises to the cell membrane. This Mycoplasma pneumoniae (strain ATCC 29342 / M129 / Subtype 1) (Mycoplasmoides pneumoniae) protein is UPF0053 protein MG146 homolog.